Here is a 269-residue protein sequence, read N- to C-terminus: MSDMRKKVTIPDILKMKQERRRITMMTAYDYPFARLVDSGGVDAILVGDSLGVVFSGHDNTLSVTMDEMIYHTRAVARAKPQAVLVTDMPFMSYQVSVEEACRNCGRMIQEGGAQAVKIEGGMNMSHVIRAVTSIDIPVMGHIGLTPQSIHRMGGYRVQGRKEQAERIMEDALAVQAAGAFSIVLEGIPSSLAASITAELSIPTIGIGAGPDCDGQVLVIHDILGLCEKYSPKFVKRYAELAPVITDAVNRYVEEVRSGAFPTEEHSFN.

2 residues coordinate Mg(2+): Asp49 and Asp88. Residues 49 to 50 (DS), Asp88, and Lys118 each bind 3-methyl-2-oxobutanoate. Glu120 contributes to the Mg(2+) binding site. Glu186 acts as the Proton acceptor in catalysis.

This sequence belongs to the PanB family. In terms of assembly, homodecamer; pentamer of dimers. The cofactor is Mg(2+).

It is found in the cytoplasm. The enzyme catalyses 3-methyl-2-oxobutanoate + (6R)-5,10-methylene-5,6,7,8-tetrahydrofolate + H2O = 2-dehydropantoate + (6S)-5,6,7,8-tetrahydrofolate. It functions in the pathway cofactor biosynthesis; (R)-pantothenate biosynthesis; (R)-pantoate from 3-methyl-2-oxobutanoate: step 1/2. Catalyzes the reversible reaction in which hydroxymethyl group from 5,10-methylenetetrahydrofolate is transferred onto alpha-ketoisovalerate to form ketopantoate. In Pelobacter propionicus (strain DSM 2379 / NBRC 103807 / OttBd1), this protein is 3-methyl-2-oxobutanoate hydroxymethyltransferase.